The sequence spans 511 residues: Maturase K (511 aa).

The protein belongs to the intron maturase 2 family. MatK subfamily.

The protein resides in the plastid. It is found in the chloroplast. Its function is as follows. Usually encoded in the trnK tRNA gene intron. Probably assists in splicing its own and other chloroplast group II introns. The protein is Maturase K of Hordeum secalinum (Meadow barley).